Reading from the N-terminus, the 223-residue chain is Glucosyl-3-phosphoglycerate phosphatase (223 aa).

Arg10 is a substrate binding site. Residue His11 is the Tele-phosphohistidine intermediate of the active site. Lys47 participates in a covalent cross-link: Isoglutamyl lysine isopeptide (Lys-Gln) (interchain with Q-Cter in protein Pup). Substrate is bound at residue Arg60. Glu84 (proton donor/acceptor) is an active-site residue. His159 is a binding site for substrate.

It belongs to the phosphoglycerate mutase family. In terms of assembly, homodimer. Dimerization of the enzyme is essential for its dephosphorylation activity.

It carries out the reaction (2R)-2-O-(alpha-D-glucopyranosyl)-3-phospho-glycerate + H2O = (2R)-2-O-(alpha-D-glucopyranosyl)-glycerate + phosphate. The enzyme catalyses 2-O-(alpha-D-mannosyl)-3-phosphoglycerate + H2O = (2R)-2-O-(alpha-D-mannosyl)-glycerate + phosphate. The catalysed reaction is (2R)-2-O-[alpha-D-mannopyranosyl-(1-&gt;2)-alpha-D-glucopyranosyl]-3-phospho-glycerate + H2O = (2R)-2-O-[alpha-D-mannopyranosyl-(1-&gt;2)-alpha-D-glucopyranosyl]-glycerate + phosphate. Its activity is regulated as follows. Progressively inhibited by cobalt ions at concentrations between 10-50 mM and by copper ions at any concentration between 1-50 mM. Functionally, involved in the biosynthesis of mycobacterial methylglucose lipopolysaccharides (MGLPs). Catalyzes the dephosphorylation of glucosyl-3-phosphoglycerate (GPG) to glucosylglycerate (GG). GPG is the preferred substrate, but GpgP also exhibits low dephosphorylation activity on mannosyl-3-phosphoglycerate (MPG) and mannosylglucosyl-3-phosphoglycerate (MGPG) in vitro. Shows only trace of phosphoglycerate mutase (PGM) activity. The chain is Glucosyl-3-phosphoglycerate phosphatase from Mycobacterium tuberculosis (strain ATCC 25618 / H37Rv).